The chain runs to 260 residues: Hydroxyethylthiazole kinase (260 aa).

M38 lines the substrate pocket. Residues R114 and T159 each contribute to the ATP site. G186 provides a ligand contact to substrate.

It belongs to the Thz kinase family. It depends on Mg(2+) as a cofactor.

The catalysed reaction is 5-(2-hydroxyethyl)-4-methylthiazole + ATP = 4-methyl-5-(2-phosphooxyethyl)-thiazole + ADP + H(+). It participates in cofactor biosynthesis; thiamine diphosphate biosynthesis; 4-methyl-5-(2-phosphoethyl)-thiazole from 5-(2-hydroxyethyl)-4-methylthiazole: step 1/1. In terms of biological role, catalyzes the phosphorylation of the hydroxyl group of 4-methyl-5-beta-hydroxyethylthiazole (THZ). This chain is Hydroxyethylthiazole kinase, found in Helicobacter pylori (strain G27).